Reading from the N-terminus, the 59-residue chain is UPF0434 protein Rsph17029_0141 (59 aa).

The protein belongs to the UPF0434 family.

This chain is UPF0434 protein Rsph17029_0141, found in Cereibacter sphaeroides (strain ATCC 17029 / ATH 2.4.9) (Rhodobacter sphaeroides).